A 20-amino-acid polypeptide reads, in one-letter code: Cuticle-degrading protease-like protein (20 aa).

The tract at residues 1–20 is disordered; it reads AIVEQQGAPXGLGRIINKXK.

The protein belongs to the peptidase S8 family.

Its subcellular location is the secreted. Functionally, capable of breaching the insect cuticle. In Metacordyceps chlamydosporia (Nematophagous fungus), this protein is Cuticle-degrading protease-like protein.